The sequence spans 356 residues: Ubiquitin-conjugating enzyme E2 variant 3 (356 aa).

The segment at 1-83 (MSDQPGTSRP…LEDLHNYHRE (83 aa)) is disordered. Over residues 18-32 (PTKTATRRRARPIAI) the composition is skewed to polar residues. The segment covering 63–76 (QPRKTVPKNVPLED) has biased composition (basic and acidic residues). The region spanning 169–324 (DIITEFMNRS…AREFVMKMAG (156 aa)) is the UBC core domain.

This sequence belongs to the ubiquitin-conjugating enzyme family. May interact with pmk-3. In terms of tissue distribution, expressed ubiquitously.

The protein localises to the nucleus. The protein resides in the cytoplasm. Its subcellular location is the cell projection. It is found in the dendrite. It localises to the axon. The protein localises to the cilium. Functionally, possible negative regulator of polyubiquitination. May modulate the activity of the p38 MAP kinase pnk-3. May have a role in axon termination and synaptic transmission at motor and mechanosensory neurons. Plays a role in intraflagellar transport in cilia and cilium length regulation. This is Ubiquitin-conjugating enzyme E2 variant 3 from Caenorhabditis elegans.